Here is a 403-residue protein sequence, read N- to C-terminus: Digeranylgeranylglycerophospholipid reductase 1 (403 aa).

Ala14, Asp33, Cys44, Ala45, Gly47, Arg98, Val122, Asp277, Gly289, and Ile290 together coordinate FAD.

It belongs to the geranylgeranyl reductase family. DGGGPL reductase subfamily. Requires FAD as cofactor.

The catalysed reaction is a 2,3-bis-O-phytanyl-sn-glycerol 1-phospholipid + 8 A = a 2,3-bis-O-(geranylgeranyl)-sn-glycerol 1-phospholipid + 8 AH2. It carries out the reaction 2,3-bis-O-(phytanyl)-sn-glycerol 1-phosphate + 8 A = 2,3-bis-O-(geranylgeranyl)-sn-glycerol 1-phosphate + 8 AH2. The enzyme catalyses CDP-2,3-bis-O-(geranylgeranyl)-sn-glycerol + 8 AH2 = CDP-2,3-bis-O-(phytanyl)-sn-glycerol + 8 A. It catalyses the reaction archaetidylserine + 8 AH2 = 2,3-bis-O-phytanyl-sn-glycero-3-phospho-L-serine + 8 A. It functions in the pathway membrane lipid metabolism; glycerophospholipid metabolism. Its function is as follows. Is involved in the reduction of 2,3-digeranylgeranylglycerophospholipids (unsaturated archaeols) into 2,3-diphytanylglycerophospholipids (saturated archaeols) in the biosynthesis of archaeal membrane lipids. Catalyzes the formation of archaetidic acid (2,3-di-O-phytanyl-sn-glyceryl phosphate) from 2,3-di-O-geranylgeranylglyceryl phosphate (DGGGP) via the hydrogenation of each double bond of the isoprenoid chains. Is also probably able to reduce double bonds of geranyl groups in CDP-2,3-bis-O-(geranylgeranyl)-sn-glycerol and archaetidylserine, thus acting at various stages in the biosynthesis of archaeal membrane lipids. This Methanosphaera stadtmanae (strain ATCC 43021 / DSM 3091 / JCM 11832 / MCB-3) protein is Digeranylgeranylglycerophospholipid reductase 1.